Reading from the N-terminus, the 242-residue chain is Endoglucanase (242 aa).

The signal sequence occupies residues Met-1–Ala-21. Catalysis depends on Asp-47, which acts as the Nucleophile. N-linked (GlcNAc...) asparagine glycans are attached at residues Asn-79, Asn-103, and Asn-217.

This sequence belongs to the glycosyl hydrolase 45 (cellulase K) family. Expressed in larval carcasses and gut, and adult gut.

Its subcellular location is the secreted. It catalyses the reaction Endohydrolysis of (1-&gt;4)-beta-D-glucosidic linkages in cellulose, lichenin and cereal beta-D-glucans.. This is Endoglucanase from Phaedon cochleariae (Mustard beetle).